A 611-amino-acid polypeptide reads, in one-letter code: Alpha-1,2-mannosyltransferase ALG9 (611 aa).

The span at 1–10 (MASRRARQRL) shows a compositional bias: basic residues. Residues 1–51 (MASRRARQRLKGGGGGGGGGGDAGPAAEKLEQLGSREAGAEPRPESGNKAG) are disordered. Residues 1–135 (MASRRARQRL…FHARILQTNK (135 aa)) lie on the Lumenal side of the membrane. The segment covering 11-23 (KGGGGGGGGGGDA) has biased composition (gly residues). The N-linked (GlcNAc...) asparagine glycan is linked to N77. Residues 136 to 156 (ILVFYFLRCLLAFVSCVCELY) traverse the membrane as a helical segment. Residues 157–171 (FYKAVCKKFGLHVSR) are Cytoplasmic-facing. The helical transmembrane segment at 172 to 192 (MMLAFLVLSTGMFCSSSAFLP) threads the bilayer. At 193-213 (SSFCMYTTLIAMTGWYMDKTP) the chain is on the lumenal side. Residues 214–234 (IAVLGVAAGAILGWPFSAALG) form a helical membrane-spanning segment. The Cytoplasmic portion of the chain corresponds to 235 to 249 (LPIAFDLLARKHRWK). A helical transmembrane segment spans residues 250 to 270 (SFLLWSLVALALFLVPVVVID). The Lumenal segment spans residues 271–310 (SYYYGKLVVAPLNIVLYNVFTSHGPDLYGTEPWYFYLING). Residues 311–331 (FLNFNVAFALALLVLPLTFLM) traverse the membrane as a helical segment. The Cytoplasmic segment spans residues 332 to 342 (EYLLQRFHVQN). Residues 343 to 363 (LGHPYWLTLAPMYIWFIIFFI) traverse the membrane as a helical segment. The Lumenal segment spans residues 364 to 370 (QPHKEER). A helical membrane pass occupies residues 371–391 (FLFPVYPLICLCGAVALSALQ). Topologically, residues 392 to 405 (KCYHFVFQRYRLEH) are cytoplasmic. Residues 406-426 (YTVTSNWLALGTVFLFGLLSF) form a helical membrane-spanning segment. Residues 427–611 (SRSVALFRGY…AKPSRKKSGG (185 aa)) are Lumenal-facing. N550 and N593 each carry an N-linked (GlcNAc...) asparagine glycan.

It belongs to the glycosyltransferase 22 family.

It is found in the endoplasmic reticulum membrane. It carries out the reaction an alpha-D-Man-(1-&gt;2)-alpha-D-Man-(1-&gt;2)-alpha-D-Man-(1-&gt;3)-[alpha-D-Man-(1-&gt;3)-alpha-D-Man-(1-&gt;6)]-beta-D-Man-(1-&gt;4)-beta-D-GlcNAc-(1-&gt;4)-alpha-D-GlcNAc-diphospho-di-trans,poly-cis-dolichol + a di-trans,poly-cis-dolichyl beta-D-mannosyl phosphate = an alpha-D-Man-(1-&gt;2)-alpha-D-Man-(1-&gt;2)-alpha-D-Man-(1-&gt;3)-[alpha-D-Man-(1-&gt;2)-alpha-D-Man-(1-&gt;3)-alpha-D-Man-(1-&gt;6)]-beta-D-Man-(1-&gt;4)-beta-D-GlcNAc-(1-&gt;4)-alpha-D-GlcNAc-diphospho-di-trans,poly-cis-dolichol + a di-trans,poly-cis-dolichyl phosphate + H(+). It catalyses the reaction an alpha-D-Man-(1-&gt;2)-alpha-D-Man-(1-&gt;2)-alpha-D-Man-(1-&gt;3)-[alpha-D-Man-(1-&gt;2)-alpha-D-Man-(1-&gt;3)-[alpha-D-Man-(1-&gt;6)]-alpha-D-Man-(1-&gt;6)]-beta-D-Man-(1-&gt;4)-beta-D-GlcNAc-(1-&gt;4)-alpha-D-GlcNAc-diphospho-di-trans,poly-cis-dolichol + a di-trans,poly-cis-dolichyl beta-D-mannosyl phosphate = an alpha-D-Man-(1-&gt;2)-alpha-D-Man-(1-&gt;2)-alpha-D-Man-(1-&gt;3)-[alpha-D-Man-(1-&gt;2)-alpha-D-Man-(1-&gt;3)-[alpha-D-Man-(1-&gt;2)-alpha-D-Man-(1-&gt;6)]-alpha-D-Man-(1-&gt;6)]-beta-D-Man-(1-&gt;4)-beta-D-GlcNAc-(1-&gt;4)-alpha-D-GlcNAc-diphospho-di-trans,poly-cis-dolichol + a di-trans,poly-cis-dolichyl phosphate + H(+). The protein operates within protein modification; protein glycosylation. Functionally, mannosyltransferase that operates in the biosynthetic pathway of dolichol-linked oligosaccharides, the glycan precursors employed in protein asparagine (N)-glycosylation. The assembly of dolichol-linked oligosaccharides begins on the cytosolic side of the endoplasmic reticulum membrane and finishes in its lumen. The sequential addition of sugars to dolichol pyrophosphate produces dolichol-linked oligosaccharides containing fourteen sugars, including two GlcNAcs, nine mannoses and three glucoses. Once assembled, the oligosaccharide is transferred from the lipid to nascent proteins by oligosaccharyltransferases. In the lumen of the endoplasmic reticulum, catalyzes the addition of the seventh and ninth alpha-1,2-linked mannose residues to Man(6)GlcNAc(2)-PP-dolichol and Man(8)GlcNAc(2)-PP-dolichol respectively. The protein is Alpha-1,2-mannosyltransferase ALG9 of Mus musculus (Mouse).